Reading from the N-terminus, the 158-residue chain is MYHFSVSFFYKIMQQLAPGSFFISKLVLVATSKTSSTPSPVSALHSMYFLAPMALATCFASSMGTISSVAFSLKWASCLKSFFKPTRTIGASGQYRNASSAHFVLALISDSKLSTANPINIISAFEYENGRKRSYSSCPAVSQSVKDTFIPSTLQSVT.

This is an uncharacterized protein from Saccharomyces cerevisiae (strain ATCC 204508 / S288c) (Baker's yeast).